Here is a 927-residue protein sequence, read N- to C-terminus: Dual serine/threonine and tyrosine protein kinase (927 aa).

The interval 1–21 (MEADGQSWAGESVSGPGPGGG) is disordered. A coiled-coil region spans residues 393 to 429 (RKKENELYESLMNIANRKQEEMKDMIVETLNTMKEEL). One can recognise a Protein kinase domain in the interval 650–904 (PKLGQELGRG…PLLGIVQPML (255 aa)). Residues 656-664 (LGRGQYGVV) and K679 contribute to the ATP site. D775 (proton acceptor) is an active-site residue.

It belongs to the protein kinase superfamily. Ser/Thr protein kinase family. In terms of tissue distribution, expressed in brain, heart, skeletal muscle, kidney and lung. Expressed in maturing tubular epithelia, with the most prominent expression in the medulla and the papilla. Expressed in thin ascending limb of the loop of Henle and the distal convoluted tubule. Expressed in all layers of transitional ureteric epithelium and in the ureteric smooth-muscle cells (at protein level). Widely expressed. Highly expressed in many brain regions, including in cerebellum, olfactory, hippocampus and cerebral cortex.

The protein resides in the cytoplasm. It localises to the cell membrane. The protein localises to the apical cell membrane. It is found in the basolateral cell membrane. Its subcellular location is the cell junction. The catalysed reaction is L-seryl-[protein] + ATP = O-phospho-L-seryl-[protein] + ADP + H(+). It carries out the reaction L-threonyl-[protein] + ATP = O-phospho-L-threonyl-[protein] + ADP + H(+). The enzyme catalyses L-tyrosyl-[protein] + ATP = O-phospho-L-tyrosyl-[protein] + ADP + H(+). Functionally, acts as a positive regulator of ERK phosphorylation downstream of fibroblast growth factor-receptor activation. Involved in the regulation of both caspase-dependent apoptosis and caspase-independent cell death. In the skin, it plays a predominant role in suppressing caspase-dependent apoptosis in response to UV stress in a range of dermal cell types. In Mus musculus (Mouse), this protein is Dual serine/threonine and tyrosine protein kinase (Dstyk).